The primary structure comprises 249 residues: Proline-rich antigen (249 aa).

Composition is skewed to pro residues over residues 1–20 (MTDQPPPSGSNPTPAPPPPG) and 38–87 (YPPP…PPGP). A disordered region spans residues 1–87 (MTDQPPPSGS…GAYAPPPPGP (87 aa)). The 1-1; approximate repeat unit spans residues 34 to 43 (LGSAYPPPTA). Positions 34-85 (LGSAYPPPTAPPVGGSYPPPPPPGGSYPPPPPPGGSYPPPPPSTGAYAPPPP) are 5 X 10 AA tandem repeats of [PV]-G-G-S-Y-P-P-P-P-P. A run of 3 repeats spans residues 46-55 (VGGSYPPPPP), 56-65 (PGGSYPPPPP), and 66-75 (PGGSYPPPPP). The stretch at 76 to 85 (STGAYAPPPP) is one 1-5; approximate repeat. In terms of domain architecture, RDD spans 99 to 242 (FWVTRVLAYV…KRQTLADKIM (144 aa)). A run of 2 repeats spans residues 101 to 123 (VTRVLAYVIDNIPATVLLGIGML) and 134 to 156 (VTDITQYNVNQYCATQPTGIGML). The interval 101–156 (VTRVLAYVIDNIPATVLLGIGMLIQTLTKQEACVTDITQYNVNQYCATQPTGIGML) is 2 X 23 AA approximate repeats. Transmembrane regions (helical) follow at residues 104 to 124 (VLAYVIDNIPATVLLGIGMLI), 151 to 171 (TGIGMLAFWFAWLMATAYLVW), and 212 to 232 (LAHFVDAVICCIGFLFPLWDS).

Belongs to the mycobacterial Pra family.

The protein resides in the cell membrane. The protein is Proline-rich antigen (ag36) of Mycobacterium leprae (strain TN).